Consider the following 692-residue polypeptide: Protein arginine N-methyltransferase 7 (692 aa).

SAM-dependent MTase PRMT-type domains are found at residues 14–359 (ENSW…YSLW) and 368–692 (AKTV…QEKR).

Belongs to the class I-like SAM-binding methyltransferase superfamily. Protein arginine N-methyltransferase family. PRMT7 subfamily.

In terms of biological role, essential arginine methyltransferase that can both catalyze the formation of omega-N monomethylarginine (MMA) and symmetrical dimethylarginine (sDMA). Specifically mediates the symmetrical dimethylation of arginine residues in the small nuclear ribonucleoproteins SmD1 and SmD3. The sequence is that of Protein arginine N-methyltransferase 7 (Art7) from Drosophila persimilis (Fruit fly).